The chain runs to 476 residues: Probable G-protein coupled receptor No9 (476 aa).

Topologically, residues 1 to 36 (MEGPPLSPAPADNVTLNVSCGRPATLFDWADHRLIS) are extracellular. N-linked (GlcNAc...) asparagine glycosylation is found at asparagine 13 and asparagine 17. Residues 37–60 (LLALAFLNLMVVAGNLLVVMAVFV) traverse the membrane as a helical segment. Residues 61–69 (HSKLRTVTN) are Cytoplasmic-facing. The helical transmembrane segment at 70 to 93 (LFIVSLACADLLVGMLVLPFSATL) threads the bilayer. At 94 to 103 (EVLDVWLYGD) the chain is on the extracellular side. A helical transmembrane segment spans residues 104-127 (VWCSVWLAVDVWMCTSSILNLCAI). Cysteine 106 and cysteine 192 form a disulfide bridge. The Cytoplasmic segment spans residues 128-152 (SLDRYLAVSQPISYPSLMSTRRAKQ). Residues 153 to 172 (LIAAVWVLSFVICFPPLVGW) form a helical membrane-spanning segment. Topologically, residues 173–200 (NDRPGTLIGSRGSSACRLTCELTNERGY) are extracellular. A helical membrane pass occupies residues 201 to 221 (VIYSALGSFFLPSTVMLFFYG). At 222–375 (RIYRTAVSTT…FRMETKAAKT (154 aa)) the chain is on the cytoplasmic side. Residues 266 to 278 (AAAGGARAHGQVR) are compositionally biased toward low complexity. 2 disordered regions span residues 266 to 293 (AAAGGARAHGQVRLTLSEPGARRQNKPS) and 317 to 351 (DSRPGRRVPQPQRPAKKLSSASQSSEDDSRPPRFI). Residues 376 to 396 (VGIIVGLFILCWLPFFVCYLV) traverse the membrane as a helical segment. Topologically, residues 397–406 (RGFCADCVPP) are extracellular. The chain crosses the membrane as a helical span at residues 407–430 (LLFSVFFWLGYCNSAVNPCVYALC). The Cytoplasmic portion of the chain corresponds to 431–476 (SRDFRFAFSSILCKCVCRRGAMERRFRRTLLVGNRSQTEEDCEVAD).

Belongs to the G-protein coupled receptor 1 family.

The protein localises to the cell membrane. Functionally, orphan G-protein coupled receptor. This is Probable G-protein coupled receptor No9 from Amphibalanus amphitrite (Striped barnacle).